We begin with the raw amino-acid sequence, 393 residues long: NADH-quinone oxidoreductase subunit D (393 aa).

The protein belongs to the complex I 49 kDa subunit family. As to quaternary structure, NDH-1 is composed of 14 different subunits. Subunits NuoB, C, D, E, F, and G constitute the peripheral sector of the complex.

The protein localises to the cell inner membrane. The catalysed reaction is a quinone + NADH + 5 H(+)(in) = a quinol + NAD(+) + 4 H(+)(out). In terms of biological role, NDH-1 shuttles electrons from NADH, via FMN and iron-sulfur (Fe-S) centers, to quinones in the respiratory chain. The immediate electron acceptor for the enzyme in this species is believed to be ubiquinone. Couples the redox reaction to proton translocation (for every two electrons transferred, four hydrogen ions are translocated across the cytoplasmic membrane), and thus conserves the redox energy in a proton gradient. In Ehrlichia ruminantium (strain Gardel), this protein is NADH-quinone oxidoreductase subunit D.